A 493-amino-acid polypeptide reads, in one-letter code: Trigger factor (493 aa).

In terms of domain architecture, PPIase FKBP-type spans 162–243 (GDFVSLDLSA…VRGVKEKELP (82 aa)). Residues 432–493 (ELALPARPAP…AAVDSGDRDI (62 aa)) are disordered. Over residues 449-470 (HAGHDHEGHDHADHAGHDHAGD) the composition is skewed to basic and acidic residues. The span at 474–485 (AEPAEAPAATAA) shows a compositional bias: low complexity.

This sequence belongs to the FKBP-type PPIase family. Tig subfamily.

It localises to the cytoplasm. It carries out the reaction [protein]-peptidylproline (omega=180) = [protein]-peptidylproline (omega=0). Its function is as follows. Involved in protein export. Acts as a chaperone by maintaining the newly synthesized protein in an open conformation. Functions as a peptidyl-prolyl cis-trans isomerase. The sequence is that of Trigger factor from Frankia alni (strain DSM 45986 / CECT 9034 / ACN14a).